Reading from the N-terminus, the 95-residue chain is Homeotic protein bicoid (95 aa).

Disordered stretches follow at residues 1-29 (NLEPLKSHTVVGLDKSCDDGSSDDMSTGM) and 42-63 (GKPSAAQAQPQPPPPPLGMMHD).

The protein belongs to the paired homeobox family. Bicoid subfamily.

It localises to the nucleus. Its function is as follows. Bicoid is polarity protein that provides positional cues for the development of head and thoracic segments. BCD regulates the expression of zygotic genes, possibly through its homeodomain, and inhibits the activity of other maternal gene products. This Drosophila subobscura (Fruit fly) protein is Homeotic protein bicoid (bcd).